The following is a 187-amino-acid chain: Chromophore lyase CpcS/CpeS 2 (187 aa).

It belongs to the CpcS/CpeS biliprotein lyase family.

In terms of biological role, covalently attaches a chromophore to Cys residue(s) of phycobiliproteins. This chain is Chromophore lyase CpcS/CpeS 2, found in Synechococcus sp. (strain JA-3-3Ab) (Cyanobacteria bacterium Yellowstone A-Prime).